The following is a 401-amino-acid chain: Voltage-gated potassium channel subunit beta-1 (401 aa).

NADP(+)-binding residues include threonine 90, tryptophan 91, glutamine 97, and aspartate 119. Residue tyrosine 124 is the Proton donor/acceptor of the active site. NADP(+) contacts are provided by asparagine 192, serine 222, arginine 223, glutamine 248, tryptophan 277, serine 278, proline 279, leucine 280, alanine 281, cysteine 282, lysine 288, arginine 298, glycine 357, serine 359, glutamine 363, glutamate 366, and asparagine 367.

The protein belongs to the shaker potassium channel beta subunit family. Homotetramer. Interaction with tetrameric potassium channel alpha subunits gives rise to a heterooctamer. Identified in potassium channel complexes containing KCNA1, KCNA2, KCNA4, KCNA5, KCNA6, KCNAB1 and KCNAB2. Part of a complex containing KCNA1, KCNA4 and LGI1; interaction with LGI1 inhibits down-regulation of KCNA1 channel activity. Interacts with the dimer formed by GNB1 and GNG2; this enhances KCNA1 binding. Interacts with SQSTM. Detected in brain, in hippocampus and striatum (at protein level). Predominantly expressed in brain. No expression found in heart, skeletal muscle or kidney. In the late embryonic and early neonatal brain, highly expressed in hippocampus, cerebral cortex, caudate putamen, colliculus and cerebellum.

It localises to the cytoplasm. It is found in the membrane. Its subcellular location is the cell membrane. It catalyses the reaction a primary alcohol + NADP(+) = an aldehyde + NADPH + H(+). The enzyme catalyses a secondary alcohol + NADP(+) = a ketone + NADPH + H(+). Functionally, regulatory subunit of the voltage-gated potassium (Kv) Shaker channels composed of pore-forming and potassium-conducting alpha subunits and of regulatory beta subunits. The beta-1/KCNAB1 cytoplasmic subunit mediates closure of delayed rectifier potassium channels by physically obstructing the pore via its N-terminal domain and increases the speed of channel closure for other family members. Promotes the inactivation of KCNA1, KCNA2, KCNA4, KCNA5 and KCNA6 alpha subunit-containing channels. Displays nicotinamide adenine dinucleotide phosphate (NADPH)-dependent aldoketoreductase activity by catalyzing the NADPH-dependent reduction of a variety of endogenous aldehydes and ketones. The binding of NADPH is required for efficient down-regulation of potassium channel activity. Oxidation of the bound NADPH restrains N-terminal domain from blocking the channel, thereby decreasing N-type inactivation of potassium channel activity. In Mus musculus (Mouse), this protein is Voltage-gated potassium channel subunit beta-1.